The following is a 345-amino-acid chain: 2-oxoglutarate and iron-dependent oxygenase domain-containing protein 2 (345 aa).

Residues 207–301 (DSHKAFVVKY…RWNLIIWMRA (95 aa)) enclose the Fe2OG dioxygenase domain. 3 residues coordinate Fe cation: His-227, Asp-229, and His-282. Arg-292 lines the 2-oxoglutarate pocket.

It belongs to the OGFOD2 family. Requires Fe(2+) as cofactor. L-ascorbate serves as cofactor.

This is 2-oxoglutarate and iron-dependent oxygenase domain-containing protein 2 (ogfod2) from Danio rerio (Zebrafish).